The chain runs to 461 residues: Probable lipid II flippase MurJ (461 aa).

12 helical membrane-spanning segments follow: residues 5–25 (ILGAGVYSDIFFVAFKLPNLF), 51–71 (FASLVGLIFCIVLFMWCLLVA), 96–116 (IVAINFWYLLLVFITTFLGAL), 123–143 (FFASAYSASLLNVCMILALLI), 156–176 (LSYGVLLGGVAQILLHFYPLV), 229–249 (IASFLDTTIASFLASGSVSYL), 258–278 (LPLALFAIAISTALFPSIAIA), 293–313 (KAWFFLVGVLLLCSIGGIMLS), 337–357 (VFSLYLLGLLPFGLTKLFSLW), 372–392 (LISLFLGLAASLSLMPLLGVL), 402–422 (GLFLFVLTIKAFGFQLFLGII), and 429–449 (LVILFLACVEILLLLAFKSWV).

Belongs to the MurJ/MviN family.

It localises to the cell inner membrane. It participates in cell wall biogenesis; peptidoglycan biosynthesis. In terms of biological role, involved in peptidoglycan biosynthesis. Transports lipid-linked peptidoglycan precursors from the inner to the outer leaflet of the cytoplasmic membrane. The polypeptide is Probable lipid II flippase MurJ (Helicobacter pylori (strain ATCC 700392 / 26695) (Campylobacter pylori)).